A 57-amino-acid chain; its full sequence is uncharacterized protein (57 aa).

The protein localises to the plastid. This is an uncharacterized protein from Euglena longa (Euglenophycean alga).